The following is a 245-amino-acid chain: rRNA adenine N-6-methyltransferase (245 aa).

The S-adenosyl-L-methionine site is built by N10, L12, G37, E58, D83, and N100.

This sequence belongs to the class I-like SAM-binding methyltransferase superfamily. rRNA adenine N(6)-methyltransferase family.

It carries out the reaction adenosine(2085) in 23S rRNA + 2 S-adenosyl-L-methionine = N(6)-dimethyladenosine(2085) in 23S rRNA + 2 S-adenosyl-L-homocysteine + 2 H(+). This protein produces a dimethylation of the adenine residue at position 2085 in 23S rRNA, resulting in reduced affinity between ribosomes and macrolide-lincosamide-streptogramin B antibiotics. The sequence is that of rRNA adenine N-6-methyltransferase (ermBC) from Escherichia coli.